The sequence spans 367 residues: Voltage-gated potassium channel subunit beta-2 (367 aa).

T56, W57, Q63, and D85 together coordinate NADP(+). Catalysis depends on Y90, which acts as the Proton donor/acceptor. N158, S188, R189, Q214, W243, S244, P245, L246, A247, C248, K254, Y262, R264, G323, S325, Q329, E332, and N333 together coordinate NADP(+).

Belongs to the shaker potassium channel beta subunit family. In terms of assembly, forms heteromultimeric complex with alpha subunits.

Its subcellular location is the cytoplasm. It localises to the membrane. It is found in the cell membrane. The protein resides in the cell projection. The protein localises to the axon. Its subcellular location is the synapse. It localises to the synaptosome. It is found in the cytoskeleton. Functionally, regulatory subunit of the voltage-gated potassium (Kv) Shaker channels composed of pore-forming and potassium-conducting alpha subunits and of regulatory beta subunits. The beta-2/KCNAB2 cytoplasmic subunit may promote potassium channel closure via a mechanism that does not involve physical obstruction of the channel pore. Enhances current amplitude of Kv1.1/KCNA1 and Kv2.2/KCNA2 channels. May display nicotinamide adenine dinucleotide phosphate (NADPH)-dependent aldoketoreductase activity by catalyzing the NADPH-dependent reduction of a wide range of aldehyde and ketone substrates. The binding of oxidized and reduced nucleotide may alter Kv channel gating and contribute to dynamic fine tuning of cell excitability. This Xenopus laevis (African clawed frog) protein is Voltage-gated potassium channel subunit beta-2 (kcnab2).